Consider the following 442-residue polypeptide: Serine--tRNA ligase (442 aa).

244-246 (TAE) serves as a coordination point for L-serine. 275–277 (RAE) is a binding site for ATP. Glutamate 298 contacts L-serine. ATP is bound at residue 365–368 (EISS). Residue serine 400 coordinates L-serine.

The protein belongs to the class-II aminoacyl-tRNA synthetase family. Type-1 seryl-tRNA synthetase subfamily. Homodimer. The tRNA molecule binds across the dimer.

The protein resides in the cytoplasm. The enzyme catalyses tRNA(Ser) + L-serine + ATP = L-seryl-tRNA(Ser) + AMP + diphosphate + H(+). It catalyses the reaction tRNA(Sec) + L-serine + ATP = L-seryl-tRNA(Sec) + AMP + diphosphate + H(+). Its pathway is aminoacyl-tRNA biosynthesis; selenocysteinyl-tRNA(Sec) biosynthesis; L-seryl-tRNA(Sec) from L-serine and tRNA(Sec): step 1/1. Functionally, catalyzes the attachment of serine to tRNA(Ser). Is also able to aminoacylate tRNA(Sec) with serine, to form the misacylated tRNA L-seryl-tRNA(Sec), which will be further converted into selenocysteinyl-tRNA(Sec). In Bradyrhizobium sp. (strain ORS 278), this protein is Serine--tRNA ligase.